A 96-amino-acid chain; its full sequence is MAKYEILYIIRPNIEEEAKNALVARFDSILTDNGATVVESKDWEKRRLAYEINDFREGLYHIVNLEATDAAALNEFDRLSKINGDILRHMIVKLDA.

Belongs to the bacterial ribosomal protein bS6 family.

Functionally, binds together with bS18 to 16S ribosomal RNA. The sequence is that of Small ribosomal subunit protein bS6 from Streptococcus pyogenes serotype M1.